Consider the following 128-residue polypeptide: Probable 4-amino-4-deoxy-L-arabinose-phosphoundecaprenol flippase subunit ArnF (128 aa).

At 1-2 (MG) the chain is on the cytoplasmic side. The helical transmembrane segment at 3-23 (LMWGLFSVIIASAAQLSMGFA) threads the bilayer. Topologically, residues 24–35 (ASHLPPMTHLWD) are periplasmic. A helical transmembrane segment spans residues 36 to 56 (FIAALLAFGLDARILLLGLLG). The Cytoplasmic segment spans residues 57-76 (YLLSVFCWYKTLHKLALSKA). Residues 77-97 (YALLSMSYVLVWIASMVLPGW) traverse the membrane as a helical segment. Topologically, residues 98–100 (EGT) are periplasmic. A helical transmembrane segment spans residues 101–121 (FSLKALLGVACIMSGLMLIFL). The Cytoplasmic portion of the chain corresponds to 122–128 (PTTKQRY).

Belongs to the ArnF family. Heterodimer of ArnE and ArnF.

It is found in the cell inner membrane. It participates in bacterial outer membrane biogenesis; lipopolysaccharide biosynthesis. Its function is as follows. Translocates 4-amino-4-deoxy-L-arabinose-phosphoundecaprenol (alpha-L-Ara4N-phosphoundecaprenol) from the cytoplasmic to the periplasmic side of the inner membrane. This is Probable 4-amino-4-deoxy-L-arabinose-phosphoundecaprenol flippase subunit ArnF from Escherichia coli O45:K1 (strain S88 / ExPEC).